The following is a 378-amino-acid chain: O-methyltransferase gsfD (378 aa).

S-adenosyl-L-methionine contacts are provided by residues 219–220, aspartate 244, 266–267, and arginine 282; these read GG and DM. Histidine 286 acts as the Proton acceptor in catalysis.

This sequence belongs to the class I-like SAM-binding methyltransferase superfamily. Cation-independent O-methyltransferase family.

It carries out the reaction desmethyl-dehydrogriseofulvin + S-adenosyl-L-methionine = dehydrogriseofulvin + S-adenosyl-L-homocysteine + H(+). It functions in the pathway secondary metabolite biosynthesis; terpenoid biosynthesis. In terms of biological role, O-methyltransferase; part of the gene cluster that mediates the biosynthesis of griseofulvin, an important antifungal drug that has been in use for a long time for treating dermatophyte infections. The first step of the pathway is the formation of the heptaketide backbone by gsfA which is initiated by priming with acetyl-CoA, followed by sequential condensations of 6 malonyl-CoA units. The resulting benzophenone can undergo a spontaneous dehydration to form norlichexanthone. However, the true precursor for the griseofulvin biosynthesis is not norlichexanthone, but the heptaketide benzophenone that is O-methylated at 3-OH by gsfB to produce griseophenone D which is further methylated at 9-OH by gsfC to yield griseophenone C. Griseophenone C is then substrate of halogenase gsfI which is responsible for the regio-specific chlorination at the C13 position to form griseophenone B. The cytochrome P450 gsfF catalyzes the coupling of orcinol and phloroglucinol rings in griseophenone B to form desmethyl-dehydrogriseofulvin A which is further methylated at 5-OH by gsfD to yield dehydrogriseofulvin. Finally, gsfE performs stereospecific reduction of enone 18 of dehydrogriseofulvin to afford the final product griseofulvin. The protein is O-methyltransferase gsfD of Penicillium aethiopicum.